Consider the following 344-residue polypeptide: Leucine-rich repeat-containing protein 75A (344 aa).

The interval 1-25 (MGTRQTKGSLAERASPGAAPGPRRE) is disordered. A compositionally biased stretch (low complexity) spans 11 to 21 (AERASPGAAPG). LRR repeat units follow at residues 204-217 (VDSV…LTDD) and 229-242 (LPRL…GNRL). The segment at 295–344 (LPTILELGEGPGSGEEVREGTVGQEDPGGGPVAPAEDHHEGKETVAAAQT) is disordered.

This sequence belongs to the LRRC75 family.

The polypeptide is Leucine-rich repeat-containing protein 75A (LRRC75A) (Homo sapiens (Human)).